Reading from the N-terminus, the 378-residue chain is Queuine tRNA-ribosyltransferase (378 aa).

Aspartate 89 acts as the Proton acceptor in catalysis. Substrate contacts are provided by residues 89–93, aspartate 143, glutamine 194, and glycine 221; that span reads DSGGF. Residues 252–258 form an RNA binding region; sequence GVGTPAN. The active-site Nucleophile is the aspartate 271. Residues 276 to 280 are RNA binding; important for wobble base 34 recognition; the sequence is ARNGR. Positions 309, 311, 314, and 340 each coordinate Zn(2+).

Belongs to the queuine tRNA-ribosyltransferase family. As to quaternary structure, homodimer. Within each dimer, one monomer is responsible for RNA recognition and catalysis, while the other monomer binds to the replacement base PreQ1. It depends on Zn(2+) as a cofactor.

The catalysed reaction is 7-aminomethyl-7-carbaguanine + guanosine(34) in tRNA = 7-aminomethyl-7-carbaguanosine(34) in tRNA + guanine. The protein operates within tRNA modification; tRNA-queuosine biosynthesis. Functionally, catalyzes the base-exchange of a guanine (G) residue with the queuine precursor 7-aminomethyl-7-deazaguanine (PreQ1) at position 34 (anticodon wobble position) in tRNAs with GU(N) anticodons (tRNA-Asp, -Asn, -His and -Tyr). Catalysis occurs through a double-displacement mechanism. The nucleophile active site attacks the C1' of nucleotide 34 to detach the guanine base from the RNA, forming a covalent enzyme-RNA intermediate. The proton acceptor active site deprotonates the incoming PreQ1, allowing a nucleophilic attack on the C1' of the ribose to form the product. After dissociation, two additional enzymatic reactions on the tRNA convert PreQ1 to queuine (Q), resulting in the hypermodified nucleoside queuosine (7-(((4,5-cis-dihydroxy-2-cyclopenten-1-yl)amino)methyl)-7-deazaguanosine). This is Queuine tRNA-ribosyltransferase from Lachnoclostridium phytofermentans (strain ATCC 700394 / DSM 18823 / ISDg) (Clostridium phytofermentans).